Consider the following 86-residue polypeptide: Centromere protein W (86 aa).

Belongs to the CENP-W/WIP1 family. As to quaternary structure, heterodimer with CENPT; this dimer coassembles with CENPS-CENPX heterodimers at centromeres to form the tetrameric CENP-T-W-S-X complex, which is a subcomplex of the large constitutive centromere-associated network (CCAN, also known as the interphase centromere complex or ICEN). Interacts with NPM1.

The protein resides in the nucleus. It is found in the chromosome. Its subcellular location is the centromere. The protein localises to the kinetochore. It localises to the nucleus matrix. The protein resides in the nucleolus. In terms of biological role, component of the CENPA-NAC (nucleosome-associated) complex, a complex that plays a central role in assembly of kinetochore proteins, mitotic progression and chromosome segregation. The CENPA-NAC complex recruits the CENPA-CAD (nucleosome distal) complex and may be involved in incorporation of newly synthesized CENPA into centromeres. Part of a nucleosome-associated complex that binds specifically to histone H3-containing nucleosomes at the centromere, as opposed to nucleosomes containing CENPA. Component of the heterotetrameric CENP-T-W-S-X complex that binds and supercoils DNA, and plays an important role in kinetochore assembly. CENPW has a fundamental role in kinetochore assembly and function. It is one of the inner kinetochore proteins, with most further proteins binding downstream. Required for normal chromosome organization and normal progress through mitosis. The protein is Centromere protein W (Cenpw) of Mus musculus (Mouse).